Here is a 149-residue protein sequence, read N- to C-terminus: Transcriptional regulator MraZ (149 aa).

SpoVT-AbrB domains follow at residues 6-52 (RSHR…PLPD) and 81-124 (AELM…DQGR).

It belongs to the MraZ family. Forms oligomers.

It localises to the cytoplasm. It is found in the nucleoid. This chain is Transcriptional regulator MraZ, found in Nitratidesulfovibrio vulgaris (strain DSM 19637 / Miyazaki F) (Desulfovibrio vulgaris).